A 2367-amino-acid chain; its full sequence is Probable G-protein coupled receptor 179 (2367 aa).

Positions 1–25 (MGTRGAVMPPPMWGLLGCCFVCAWA) are cleaved as a signal peptide. The Extracellular portion of the chain corresponds to 26 to 381 (LGGPRPIRSL…CLVEEAAVLR (356 aa)). A cache-like region region spans residues 62–245 (YLYSGDAQQL…CQEGRLRPGW (184 aa)). Asparagine 75 is a glycosylation site (N-linked (GlcNAc...) asparagine). A disulfide bridge links cysteine 76 with cysteine 236. N-linked (GlcNAc...) asparagine glycosylation occurs at asparagine 298. The helical transmembrane segment at 382–402 (AAVLACQACCMLAIFLSMLVS) threads the bilayer. Residues 403–415 (YRCRRNKRIWASG) lie on the Cytoplasmic side of the membrane. The chain crosses the membrane as a helical span at residues 416-436 (VVLLETVLFGFLLLYFPVFIL). The Extracellular segment spans residues 437 to 444 (YFKPSVFR). A helical membrane pass occupies residues 445-465 (CIALRWVRLLGFAIVYGTIIL). A disulfide bond links cysteine 445 and cysteine 537. Over 466–493 (KLYRVLQLFLSRTAQRSALLSSGRLLRR) the chain is Cytoplasmic. Residues 494–514 (LGLLLLPVLGFLAVWTVGALE) traverse the membrane as a helical segment. Over 515–543 (RGIQHAPLVIRGHTPSGRHFYLCHHDRWD) the chain is Extracellular. A helical transmembrane segment spans residues 544 to 564 (YIMVVAELLLLCWGSFLCYAT). Residues 565-575 (RAVLSAFHEPR) lie on the Cytoplasmic side of the membrane. A helical membrane pass occupies residues 576-594 (YMGIALHNELLLSAAFHTA). At 595-607 (RFVLVPSLHPDWT) the chain is on the extracellular side. A helical membrane pass occupies residues 608-628 (LLLFFFHTHSTVTTTLALIFI). The Cytoplasmic portion of the chain corresponds to 629 to 2367 (PKFWKLGAPP…PPTVYPWDWE (1739 aa)). Disordered regions lie at residues 731 to 818 (ARQH…FRSA), 869 to 932 (REER…PHPP), 1039 to 1083 (KSRA…QQGS), 1098 to 1198 (RSTY…AGKT), 1247 to 1431 (EVTE…CPWE), 1537 to 1557 (PRES…SSKA), 1577 to 1672 (DLRP…ERPQ), 1723 to 1757 (AIRK…PTPE), 1823 to 1852 (SEGT…KGRL), 1886 to 2108 (AQAP…GSVE), 2133 to 2212 (WEAG…KEAG), and 2308 to 2367 (GVRE…WDWE). Residues 738–759 (SGSPGHGSLPGSSRRRLLSSSL) are compositionally biased toward low complexity. The segment covering 773–782 (STYDQRREQD) has biased composition (basic and acidic residues). A compositionally biased stretch (basic and acidic residues) spans 1039 to 1067 (KSRAGENEMDAEDAHHQREANDVDEDRPK). Residues 1153–1164 (LQNQQNAHTSRM) are compositionally biased toward polar residues. Composition is skewed to basic and acidic residues over residues 1171-1181 (EGSREQEDRGR), 1277-1299 (RALR…KSEP), 1341-1362 (GRIR…EKPG), and 1390-1407 (EDGK…QEKQ). The segment covering 1615–1639 (ESQKDKEKMPGKSEIEDVTAWEKPE) has biased composition (basic and acidic residues). Composition is skewed to basic and acidic residues over residues 1840–1851 (AEQREKALEKGR), 1903–1920 (AEGH…RQDP), 1970–1979 (SHLDRQRPDQ), 2023–2054 (VTER…KSEP), 2061–2070 (KKPEMADFRQ), and 2165–2180 (TEEH…REQE). A compositionally biased stretch (low complexity) spans 2326–2340 (PEPSLQEAESQSSSL).

The protein belongs to the G-protein coupled receptor 3 family. In terms of assembly, homodimer. Associates with the R7 group RGS-GNB5 complexes, composed of an R7 group RGS subunit (RGS6, RGS7, RGS9 or RGS11) and GNB5, promoting their localization to the cell membrane and regulating the GTPase activator activity of R7 RGS proteins. Interacts with TRPM1. Interacts with GRM6. Interacts with EGFLAM; transsynaptic interaction is required for synaptic organization of photoreceptor cells. In terms of tissue distribution, expressed in the retina.

The protein localises to the cell membrane. The protein resides in the postsynaptic cell membrane. Its subcellular location is the cell projection. It localises to the dendrite. Its function is as follows. Orphan receptor involved in vision. Required for signal transduction through retinal depolarizing bipolar cells. Acts as an atypical G-protein coupled receptor that recruits and regulates the R7 group RGS-GNB5 complexes instead of activating G proteins: promotes the GTPase activator activity of R7 RGS proteins, increasing the GTPase activity of G protein alpha subunits, thereby driving them into their inactive GDP-bound form. Associates with components of metabotropic signaling cascade in retina ON-bipolar neurons, such as TRPM1 and GRM6: may control the ability of the GRM6 cascade to gate TRPM1. This is Probable G-protein coupled receptor 179 from Homo sapiens (Human).